The sequence spans 98 residues: Large ribosomal subunit protein uL23 (98 aa).

It belongs to the universal ribosomal protein uL23 family. As to quaternary structure, part of the 50S ribosomal subunit. Contacts protein L29, and trigger factor when it is bound to the ribosome.

Its function is as follows. One of the early assembly proteins it binds 23S rRNA. One of the proteins that surrounds the polypeptide exit tunnel on the outside of the ribosome. Forms the main docking site for trigger factor binding to the ribosome. The sequence is that of Large ribosomal subunit protein uL23 from Methylobacterium radiotolerans (strain ATCC 27329 / DSM 1819 / JCM 2831 / NBRC 15690 / NCIMB 10815 / 0-1).